The primary structure comprises 112 residues: Mitochondrial import inner membrane translocase subunit TIM14-2 (112 aa).

A helical transmembrane segment spans residues 7 to 25 (AGAAVAAAAYAGKYGIEAW). Residues 53–112 (EAALILGVRESVAAEKVKEAHRRVMVANHPDAGGSHYLASKINEAKDMMLGKTKNSGSAF) enclose the J domain.

Belongs to the TIM14 family. As to quaternary structure, probable component of the PAM complex at least composed of a mitochondrial HSP70 protein, TIMM44 and TIMM14. The complex interacts with the TIMM23 component of the TIM17:23 complex.

It is found in the mitochondrion. It localises to the mitochondrion inner membrane. Component of the PAM complex, a complex required for the translocation of transit peptide-containing proteins from the inner membrane into the mitochondrial matrix in an ATP-dependent manner. This chain is Mitochondrial import inner membrane translocase subunit TIM14-2 (TIM14-2), found in Arabidopsis thaliana (Mouse-ear cress).